The primary structure comprises 602 residues: Proteasome-associated ATPase (602 aa).

Residues 1–17 (MSGPRSGSGSDGSTGRP) show a composition bias toward low complexity. The disordered stretch occupies residues 1–31 (MSGPRSGSGSDGSTGRPGDAESRRSAYEKET). The span at 18–31 (GDAESRRSAYEKET) shows a compositional bias: basic and acidic residues. A coiled-coil region spans residues 19–106 (DAESRRSAYE…LKEEVDRLAQ (88 aa)). ATP is bound at residue 289-294 (GCGKTL). Residues 601-602 (YL) form a docks into pockets in the proteasome alpha-ring region.

The protein belongs to the AAA ATPase family. As to quaternary structure, homohexamer. Assembles into a hexameric ring structure that caps the 20S proteasome core. Strongly interacts with the prokaryotic ubiquitin-like protein Pup through a hydrophobic interface; the interacting region of ARC lies in its N-terminal coiled-coil domain. There is one Pup binding site per ARC hexamer ring. Upon ATP-binding, the C-terminus of ARC interacts with the alpha-rings of the proteasome core, possibly by binding to the intersubunit pockets.

It participates in protein degradation; proteasomal Pup-dependent pathway. Its function is as follows. ATPase which is responsible for recognizing, binding, unfolding and translocation of pupylated proteins into the bacterial 20S proteasome core particle. May be essential for opening the gate of the 20S proteasome via an interaction with its C-terminus, thereby allowing substrate entry and access to the site of proteolysis. Thus, the C-termini of the proteasomal ATPase may function like a 'key in a lock' to induce gate opening and therefore regulate proteolysis. The chain is Proteasome-associated ATPase from Frankia casuarinae (strain DSM 45818 / CECT 9043 / HFP020203 / CcI3).